A 269-amino-acid chain; its full sequence is Ribonuclease HII (269 aa).

An RNase H type-2 domain is found at 83–269 (YLIAGVDEVG…HRMSFLTNIL (187 aa)). A divalent metal cation contacts are provided by Asp-89, Glu-90, and Asp-185.

Belongs to the RNase HII family. It depends on Mn(2+) as a cofactor. Mg(2+) serves as cofactor.

It localises to the cytoplasm. The catalysed reaction is Endonucleolytic cleavage to 5'-phosphomonoester.. In terms of biological role, endonuclease that specifically degrades the RNA of RNA-DNA hybrids. This is Ribonuclease HII from Clostridium botulinum (strain Hall / ATCC 3502 / NCTC 13319 / Type A).